The following is an 88-amino-acid chain: Small ribosomal subunit protein uS17 (88 aa).

It belongs to the universal ribosomal protein uS17 family. Part of the 30S ribosomal subunit.

One of the primary rRNA binding proteins, it binds specifically to the 5'-end of 16S ribosomal RNA. The sequence is that of Small ribosomal subunit protein uS17 from Prochlorococcus marinus (strain NATL1A).